The sequence spans 121 residues: uncharacterized protein (121 aa).

3 helical membrane-spanning segments follow: residues 26-46 (YACSIFLLSSYCGNCLTAVAT), 57-77 (SIPLLTLVLLPSTTPSSSVLI), and 90-110 (SFCFTLALLSLLIPPLKLLCV).

The protein resides in the membrane. This is an uncharacterized protein from Saccharomyces cerevisiae (strain ATCC 204508 / S288c) (Baker's yeast).